A 94-amino-acid polypeptide reads, in one-letter code: Large ribosomal subunit protein eL14 (94 aa).

It belongs to the eukaryotic ribosomal protein eL14 family.

This Methanopyrus kandleri (strain AV19 / DSM 6324 / JCM 9639 / NBRC 100938) protein is Large ribosomal subunit protein eL14.